Reading from the N-terminus, the 495-residue chain is Geraniol 8-hydroxylase (495 aa).

The helical transmembrane segment at 5-25 (FLTIAIGFLFTITLYQALNFF) threads the bilayer. Cysteine 438 contacts heme.

Belongs to the cytochrome P450 family. Requires heme as cofactor. In terms of tissue distribution, expressed in leaves, stems and roots.

Its subcellular location is the endoplasmic reticulum membrane. The enzyme catalyses (2E)-geraniol + reduced [NADPH--hemoprotein reductase] + O2 = (6E)-8-hydroxygeraniol + oxidized [NADPH--hemoprotein reductase] + H2O + H(+). Hydroxylase involved in the biosynthesis of hydroxygeraniol, a precursor of the iridoid monoterpenoid swertiamarin. In Swertia mussotii (Felwort), this protein is Geraniol 8-hydroxylase (CYP76B10).